Reading from the N-terminus, the 233-residue chain is UPF0128 protein MJ1463 (233 aa).

This sequence belongs to the UPF0128 family.

The protein is UPF0128 protein MJ1463 of Methanocaldococcus jannaschii (strain ATCC 43067 / DSM 2661 / JAL-1 / JCM 10045 / NBRC 100440) (Methanococcus jannaschii).